The sequence spans 100 residues: MIREERLLKVLRAPHVSEKASIAMEKSNTIVLKVAKDATKAEIKAAVQKLFEVEVESVNTLLMKGKVKRHGQRIGRRSDWKKAYVTLKEGQNLDFVGGAE.

The protein belongs to the universal ribosomal protein uL23 family. In terms of assembly, part of the 50S ribosomal subunit. Contacts protein L29, and trigger factor when it is bound to the ribosome.

One of the early assembly proteins it binds 23S rRNA. One of the proteins that surrounds the polypeptide exit tunnel on the outside of the ribosome. Forms the main docking site for trigger factor binding to the ribosome. This is Large ribosomal subunit protein uL23 from Proteus mirabilis (strain HI4320).